The sequence spans 168 residues: Photosystem I assembly protein Ycf3 (168 aa).

TPR repeat units lie at residues 35–68, 72–105, and 120–153; these read AFTY…EIDP, SYIL…NPFL, and GEQA…TPGN.

This sequence belongs to the Ycf3 family.

It is found in the plastid. It localises to the chloroplast thylakoid membrane. In terms of biological role, essential for the assembly of the photosystem I (PSI) complex. May act as a chaperone-like factor to guide the assembly of the PSI subunits. This chain is Photosystem I assembly protein Ycf3, found in Gossypium barbadense (Sea Island cotton).